A 251-amino-acid chain; its full sequence is Glucosamine-6-phosphate deaminase (251 aa).

Asp67 acts as the Proton acceptor; for enolization step in catalysis. Asn136 acts as the For ring-opening step in catalysis. The Proton acceptor; for ring-opening step role is filled by His138. The For ring-opening step role is filled by Glu143.

Belongs to the glucosamine/galactosamine-6-phosphate isomerase family. NagB subfamily.

The enzyme catalyses alpha-D-glucosamine 6-phosphate + H2O = beta-D-fructose 6-phosphate + NH4(+). It functions in the pathway amino-sugar metabolism; N-acetylneuraminate degradation; D-fructose 6-phosphate from N-acetylneuraminate: step 5/5. Functionally, catalyzes the reversible isomerization-deamination of glucosamine 6-phosphate (GlcN6P) to form fructose 6-phosphate (Fru6P) and ammonium ion. This Geobacillus sp. (strain WCH70) protein is Glucosamine-6-phosphate deaminase.